Here is a 70-residue protein sequence, read N- to C-terminus: Mu-agatoxin-Ao1a (70 aa).

The first 20 residues, 1 to 20 (MKAIIFFCFLSVMVFIVAEA), serve as a signal peptide directing secretion. The propeptide occupies 21–33 (SSLEALKIFEGER). 4 disulfide bridges follow: cysteine 35-cysteine 50, cysteine 42-cysteine 55, cysteine 49-cysteine 65, and cysteine 57-cysteine 63. An Asparagine amide modification is found at asparagine 69.

Belongs to the neurotoxin 07 (Beta/delta-agtx) family. 04 (aga-5) subfamily. In terms of tissue distribution, expressed by the venom gland.

It is found in the secreted. Functionally, insecticidal neurotoxin that modulates the insect Nav channel (DmNaV1/tipE (para/tipE)) in a unique manner, with both the activation and inactivation processes being affected. The voltage dependence of activation is shifted toward more hyperpolarized potentials (analogous to site 4 toxins) and a non-inactivating persistent sodium current is induced (site 3-like action). Interestingly, both effects take place in a voltage-dependent manner, producing a bell-shaped curve between -80 and 0 mV. This chain is Mu-agatoxin-Ao1a, found in Agelena orientalis (Funnel-web spider).